Consider the following 116-residue polypeptide: Mitochondrial import inner membrane translocase subunit PAM16 like 2 (116 aa).

The transit peptide at 1 to 27 (MAGRLLANLIVMGSGIIGRAVFQAYRQ) directs the protein to the mitochondrion. The segment at 57-106 (EARQILGVTEKTSWEEILQKYDKLFENNAKAGSFYLQSKVHRAKECLEVV) is J-like.

This sequence belongs to the TIM16/PAM16 family. As to expression, expressed constitutively and ubiquitously, except in root tips, at low levels.

It is found in the mitochondrion inner membrane. The protein localises to the cytoplasm. Functionally, regulates ATP-dependent protein translocation into the mitochondrial matrix. Involved in the uptake of thaxtomin, a phytotoxin produced by Streptomyces bacteria, that causes dramatic cell swelling, reduced seedling growth, and inhibition of cellulose synthesis. Modulates polar auxin transport. Involved in importing a negative regulator of plant immunity into mitochondria, thus protecting plants from over-accumulation of reactive oxygen species (ROS) and preventing autoimmunity. Confers sensitivity to virulent pathogens such as the oomycete H.arabidopsidis Noco2 and the bacteria P.syringae pv. maculicola ES4326. The protein is Mitochondrial import inner membrane translocase subunit PAM16 like 2 of Arabidopsis thaliana (Mouse-ear cress).